Here is a 159-residue protein sequence, read N- to C-terminus: Ribosomal RNA large subunit methyltransferase H (159 aa).

S-adenosyl-L-methionine contacts are provided by residues leucine 76, glycine 108, and 127 to 132; that span reads FGLLTL.

The protein belongs to the RNA methyltransferase RlmH family. As to quaternary structure, homodimer.

The protein localises to the cytoplasm. It carries out the reaction pseudouridine(1915) in 23S rRNA + S-adenosyl-L-methionine = N(3)-methylpseudouridine(1915) in 23S rRNA + S-adenosyl-L-homocysteine + H(+). Its function is as follows. Specifically methylates the pseudouridine at position 1915 (m3Psi1915) in 23S rRNA. This Leuconostoc citreum (strain KM20) protein is Ribosomal RNA large subunit methyltransferase H.